The sequence spans 865 residues: Nitrogen regulatory protein nrfA (865 aa).

5 disordered regions span residues 1–75, 115–140, 177–227, 557–605, and 617–663; these read MEGI…DEMQ, RKER…PSGI, FDSP…QDQR, GSTD…RTAS, and LNGS…AGPT. Over residues 32 to 46 the composition is skewed to low complexity; the sequence is DDFTFDSPFSSSGSS. Composition is skewed to basic and acidic residues over residues 115–126 and 180–189; these read RKEREQQEREQQ and PAEHPSHPSA. Positions 582-592 are enriched in polar residues; the sequence is ASVSDVRNQNQ. The GATA-type zinc-finger motif lies at 665–689; it reads CTNCFTQTTPLWRRNPEGQPLCNAC. A disordered region spans residues 713-854; that stretch reads NRSSANTLAV…NHSIAGGQGA (142 aa). 2 stretches are compositionally biased toward polar residues: residues 715-724 and 737-764; these read SSANTLAVGT and IQHA…SNTL. Composition is skewed to low complexity over residues 771–786 and 830–844; these read PIAA…AGVA and PLAP…ANPA.

The protein resides in the nucleus. In terms of biological role, major nitrogen regulatory protein. The sequence is that of Nitrogen regulatory protein nrfA (nrfA) from Penicillium urticae.